Reading from the N-terminus, the 343-residue chain is Flavone 3'-O-methyltransferase OMT2 (343 aa).

(E)-ferulate is bound at residue asparagine 107. Positions 184, 207, 227, 228, 240, and 241 each coordinate S-adenosyl-L-homocysteine. Histidine 245 serves as the catalytic Proton acceptor. A (E)-5-hydroxyferulate-binding site is contributed by aspartate 246. Catalysis depends on residues glutamate 273 and glutamate 305.

Belongs to the class I-like SAM-binding methyltransferase superfamily. Cation-independent O-methyltransferase family. COMT subfamily. In terms of assembly, homodimer.

The enzyme catalyses (E)-5-hydroxyferulate + S-adenosyl-L-methionine = (E)-sinapate + S-adenosyl-L-homocysteine + H(+). It carries out the reaction luteolin + S-adenosyl-L-methionine = chrysoeriol + S-adenosyl-L-homocysteine + H(+). The catalysed reaction is quercetin + S-adenosyl-L-methionine = isorhamnetin + S-adenosyl-L-homocysteine + H(+). It catalyses the reaction (E)-caffeate + S-adenosyl-L-methionine = (E)-ferulate + S-adenosyl-L-homocysteine + H(+). The enzyme catalyses a 3'-hydroxyflavone + S-adenosyl-L-methionine = a 3'-methoxyflavone + S-adenosyl-L-homocysteine + H(+). It participates in flavonoid metabolism. Its function is as follows. Catalyzes the 3'-O-methylation of the flavonoids luteolin and quercetin. Catalyzes the 3- of 5-O-methylation of the phenylpropanoids caffeate and 5-hydroxyferulate. Substrate preference is 5-hydroxyferulate &gt; luteolin &gt; quercetin &gt; caffeate. Apigenin, kempferol and 3,4-dimethylquercetin do not seem to be substrates for methylation. The chain is Flavone 3'-O-methyltransferase OMT2 from Chrysosplenium americanum (American golden saxifrage).